A 108-amino-acid chain; its full sequence is Thaicobrin (108 aa).

Positions 1 to 108 (SPPGNWQKAD…IWQKGLWWLG (108 aa)) constitute a B30.2/SPRY domain.

The protein belongs to the ohanin/vespryn family. Expressed by the venom gland.

Its subcellular location is the secreted. Neurotoxin that produces dose-dependent hypolocomotion and hyperalgesia in mice. May directly act on the central nervous system, as it is 6500-fold more potent when administered intracerebroventricularly than intraperitoneal. The polypeptide is Thaicobrin (Naja kaouthia (Monocled cobra)).